The primary structure comprises 104 residues: NADH-ubiquinone oxidoreductase 12 kDa subunit, mitochondrial (104 aa).

It belongs to the complex I NDUFS6 subunit family. In terms of assembly, complex I is composed of about 40 different subunits.

The protein localises to the mitochondrion inner membrane. Accessory subunit of the mitochondrial membrane respiratory chain NADH dehydrogenase (Complex I), that is believed not to be involved in catalysis. Complex I functions in the transfer of electrons from NADH to the respiratory chain. The immediate electron acceptor for the enzyme is believed to be ubiquinone. This is NADH-ubiquinone oxidoreductase 12 kDa subunit, mitochondrial (nuo-12.3) from Neurospora crassa (strain ATCC 24698 / 74-OR23-1A / CBS 708.71 / DSM 1257 / FGSC 987).